Consider the following 206-residue polypeptide: Protein Nef (206 aa).

A lipid anchor (N-myristoyl glycine; by host) is attached at glycine 2. A Phosphoserine; by host modification is found at serine 6. An acidic; interacts with host PACS1 and PACS2; stabilizes the interaction of NEF/MHC-I with host AP1M1; necessary for MHC-I internalization region spans residues 62 to 65; it reads EEEK. Residues 69 to 78 are SH3-binding; interaction with Src family tyrosine kinases; it reads PVTPQVPLRP. The PxxP; stabilizes the interaction of NEF/MHC-I with host AP1M1; necessary for MHC-I internalization motif lies at 72–75; sequence PQVP. The tract at residues 108–124 is mediates dimerization, Nef-PTE1 interaction; it reads DILDLWIYHTQGYFPDW. The interval 148-180 is binding to ATP6V1H; it reads VEPDKVEEANKGENTSLLHPVSLHGMDDPEREV. The Dileucine internalization motif; necessary for CD4 internalization signature appears at 164-165; the sequence is LL. Positions 174–175 match the Diacidic; necessary for CD4 internalization motif; it reads DD.

This sequence belongs to the lentivirus primate group Nef protein family. In terms of assembly, monomer; cytosolic form. Homodimer; membrane bound form. Interacts with Nef associated p21-activated kinase (PAK2); this interaction activates PAK2. Associates with the Nef-MHC-I-AP1 complex; this complex is required for MHC-I internalization. Interacts (via C-terminus) with host PI3-kinase. Interacts with host PACS1; this interaction seems to be weak. Interacts with host PACS2. Interacts with host LCK and MAPK3; these interactions inhibit the kinase activity of the latter. Interacts with host ATP6V1H; this interaction may play a role in CD4 endocytosis. Associates with the CD4-Nef-AP2 complex; this complex is required for CD4 internalization. Interacts with host AP2 subunit alpha and AP2 subunit sigma2. Interacts with TCR-zeta chain; this interaction up-regulates the Fas ligand (FasL) surface expression. Interacts with host HCK, LYN, and SRC; these interactions activate the Src family kinases. Interacts with MAP3K5; this interaction inhibits the Fas and TNFR-mediated death signals. Interacts with beta-COP and PTE1. Interacts with human RACK1; this increases Nef phosphorylation by PKC. Interacts with TP53; this interaction decreases the half-life of TP53, protecting the infected cell against p53-mediated apoptosis. In terms of processing, the virion-associated Nef proteins are cleaved by the viral protease to release the soluble C-terminal core protein. Nef is probably cleaved concomitantly with viral structural proteins on maturation of virus particles. Post-translationally, myristoylated. Phosphorylated on serine residues, probably by host PKCdelta and theta.

The protein resides in the host cell membrane. It is found in the virion. It localises to the secreted. Its subcellular location is the host Golgi apparatus membrane. Functionally, factor of infectivity and pathogenicity, required for optimal virus replication. Alters numerous pathways of T-lymphocyte function and down-regulates immunity surface molecules in order to evade host defense and increase viral infectivity. Alters the functionality of other immunity cells, like dendritic cells, monocytes/macrophages and NK cells. Its function is as follows. In infected CD4(+) T-lymphocytes, down-regulates the surface MHC-I, mature MHC-II, CD4, CD28, CCR5 and CXCR4 molecules. Mediates internalization and degradation of host CD4 through the interaction of with the cytoplasmic tail of CD4, the recruitment of AP-2 (clathrin adapter protein complex 2), internalization through clathrin coated pits, and subsequent transport to endosomes and lysosomes for degradation. Diverts host MHC-I molecules to the trans-Golgi network-associated endosomal compartments by an endocytic pathway to finally target them for degradation. MHC-I down-regulation may involve AP-1 (clathrin adapter protein complex 1) or possibly Src family kinase-ZAP70/Syk-PI3K cascade recruited by PACS2. In consequence infected cells are masked for immune recognition by cytotoxic T-lymphocytes. Decreasing the number of immune receptors also prevents reinfection by more HIV particles (superinfection). Down-regulates host SERINC3 and SERINC5 thereby excluding these proteins from the viral particles. Virion infectivity is drastically higher when SERINC3 or SERINC5 are excluded from the viral envelope, because these host antiviral proteins impair the membrane fusion event necessary for subsequent virion penetration. Bypasses host T-cell signaling by inducing a transcriptional program nearly identical to that of anti-CD3 cell activation. Interaction with TCR-zeta chain up-regulates the Fas ligand (FasL). Increasing surface FasL molecules and decreasing surface MHC-I molecules on infected CD4(+) cells send attacking cytotoxic CD8+ T-lymphocytes into apoptosis. In terms of biological role, plays a role in optimizing the host cell environment for viral replication without causing cell death by apoptosis. Protects the infected cells from apoptosis in order to keep them alive until the next virus generation is ready to strike. Inhibits the Fas and TNFR-mediated death signals by blocking MAP3K5/ASK1. Decreases the half-life of TP53, protecting the infected cell against p53-mediated apoptosis. Inhibits the apoptotic signals regulated by the Bcl-2 family proteins through the formation of a Nef/PI3-kinase/PAK2 complex that leads to activation of PAK2 and induces phosphorylation of host BAD. Functionally, extracellular Nef protein targets CD4(+) T-lymphocytes for apoptosis by interacting with CXCR4 surface receptors. In Homo sapiens (Human), this protein is Protein Nef.